A 764-amino-acid polypeptide reads, in one-letter code: Hemocyte protein-glutamine gamma-glutamyltransferase (764 aa).

Residues Cys-343, His-402, and Asp-425 contribute to the active site. Ca(2+) is bound by residues Asn-465, Asp-467, Glu-522, and Glu-527.

This sequence belongs to the transglutaminase superfamily. Transglutaminase family. It depends on Ca(2+) as a cofactor. Mainly expressed in hemocytes, hepatopancreas, and gastric tissues. On the other hand nothing was detected in the heart, intestine and muscle.

The protein resides in the membrane. It carries out the reaction L-glutaminyl-[protein] + L-lysyl-[protein] = [protein]-L-lysyl-N(6)-5-L-glutamyl-[protein] + NH4(+). Catalyzes the cross-linking of proteins and the conjugation of polyamines to proteins. This chain is Hemocyte protein-glutamine gamma-glutamyltransferase, found in Tachypleus tridentatus (Japanese horseshoe crab).